Here is a 124-residue protein sequence, read N- to C-terminus: p53-regulated apoptosis-inducing protein 1 (124 aa).

A compositionally biased stretch (polar residues) spans 1–16 (MGSSSEASFRSAQASC). The interval 1–46 (MGSSSEASFRSAQASCSGARRQGLGRGDQNLSVMPPNGRAQTHTPG) is disordered.

As to expression, only found to be expressed in thymus.

The protein resides in the mitochondrion. Functionally, may play an important role in mediating p53/TP53-dependent apoptosis. The polypeptide is p53-regulated apoptosis-inducing protein 1 (TP53AIP1) (Homo sapiens (Human)).